Reading from the N-terminus, the 66-residue chain is Large ribosomal subunit protein bL31 (66 aa).

Cysteine 16, cysteine 18, cysteine 36, and cysteine 39 together coordinate Zn(2+).

This sequence belongs to the bacterial ribosomal protein bL31 family. Type A subfamily. In terms of assembly, part of the 50S ribosomal subunit. Zn(2+) is required as a cofactor.

Functionally, binds the 23S rRNA. The polypeptide is Large ribosomal subunit protein bL31 (Campylobacter lari (strain RM2100 / D67 / ATCC BAA-1060)).